We begin with the raw amino-acid sequence, 100 residues long: Osteocalcin (100 aa).

The first 23 residues, 1 to 23 (MRALTLLALLALAALCIAGQAGA), serve as a signal peptide directing secretion. A propeptide spanning residues 24–51 (KPSGAESSKGAAFVSKQEGSEVVKRPRR) is cleaved from the precursor. The region spanning 52 to 98 (YLYQWLGAPVPYPDTLEPRREVCELNPDCDELADHIGFQEAYRRFYG) is the Gla domain. 4 residues coordinate Ca(2+): E68, E72, E75, and D81. 3 positions are modified to 4-carboxyglutamate: E68, E72, and E75. C74 and C80 are joined by a disulfide.

The protein belongs to the osteocalcin/matrix Gla protein family. Gamma-carboxyglutamate residues are formed by vitamin K dependent carboxylation by GGCX. These residues are essential for the binding of calcium. Decarboxylation promotes the hormone activity.

Its subcellular location is the secreted. Its function is as follows. The carboxylated form is one of the main organic components of the bone matrix, which constitutes 1-2% of the total bone protein: it acts as a negative regulator of bone formation and is required to limit bone formation without impairing bone resorption or mineralization. The carboxylated form binds strongly to apatite and calcium. In terms of biological role, the uncarboxylated form acts as a hormone secreted by osteoblasts, which regulates different cellular processes, such as energy metabolism, male fertility and brain development. Regulates of energy metabolism by acting as a hormone favoring pancreatic beta-cell proliferation, insulin secretion and sensitivity and energy expenditure. Uncarboxylated osteocalcin hormone also promotes testosterone production in the testes: acts as a ligand for G protein-coupled receptor GPRC6A at the surface of Leydig cells, initiating a signaling response that promotes the expression of enzymes required for testosterone synthesis in a CREB-dependent manner. Also acts as a regulator of brain development: osteocalcin hormone crosses the blood-brain barrier and acts as a ligand for GPR158 on neurons, initiating a signaling response that prevents neuronal apoptosis in the hippocampus, favors the synthesis of all monoamine neurotransmitters and inhibits that of gamma-aminobutyric acid (GABA). Osteocalcin also crosses the placenta during pregnancy and maternal osteocalcin is required for fetal brain development. This Pan troglodytes (Chimpanzee) protein is Osteocalcin.